Consider the following 317-residue polypeptide: D-aminoacyl-tRNA deacylase (317 aa).

This sequence belongs to the DtdA deacylase family. It depends on Zn(2+) as a cofactor. In terms of tissue distribution, ubiquitous.

The protein resides in the nucleus. It localises to the cytoplasm. It catalyses the reaction a D-aminoacyl-tRNA + H2O = a tRNA + a D-alpha-amino acid + H(+). It carries out the reaction glycyl-tRNA(Ala) + H2O = tRNA(Ala) + glycine + H(+). Functionally, hydrolyzes D-aminoacyl-tRNA into D-amino acid and free tRNA. Broad specificity toward the amino acid, but strict specificity toward the D-isomer. Seems to be required for ethanol tolerance. This is D-aminoacyl-tRNA deacylase (GEK1) from Arabidopsis thaliana (Mouse-ear cress).